Here is a 69-residue protein sequence, read N- to C-terminus: Large ribosomal subunit protein uL30 (69 aa).

It belongs to the universal ribosomal protein uL30 family. Part of the 50S ribosomal subunit.

The polypeptide is Large ribosomal subunit protein uL30 (Rhizobium etli (strain ATCC 51251 / DSM 11541 / JCM 21823 / NBRC 15573 / CFN 42)).